A 104-amino-acid polypeptide reads, in one-letter code: N(4)-acetylcytidine amidohydrolase (104 aa).

In terms of domain architecture, ASCH spans 6 to 94 (ITFFQRFQND…IAEIYPNQTQ (89 aa)). Lysine 21 acts as the Proton acceptor in catalysis. Threonine 24 functions as the Nucleophile in the catalytic mechanism. Catalysis depends on glutamate 74, which acts as the Proton donor.

The protein belongs to the N(4)-acetylcytidine amidohydrolase family.

It catalyses the reaction N(4)-acetylcytidine + H2O = cytidine + acetate + H(+). It carries out the reaction N(4)-acetyl-2'-deoxycytidine + H2O = 2'-deoxycytidine + acetate + H(+). The catalysed reaction is N(4)-acetylcytosine + H2O = cytosine + acetate + H(+). Functionally, catalyzes the hydrolysis of N(4)-acetylcytidine (ac4C). The chain is N(4)-acetylcytidine amidohydrolase (yqfB) from Salmonella agona (strain SL483).